The following is a 598-amino-acid chain: Aspartate--tRNA(Asp/Asn) ligase (598 aa).

Glu-170 contacts L-aspartate. The segment at 194–197 (QLFK) is aspartate. Arg-216 is a binding site for L-aspartate. Residues 216–218 (RDE) and Gln-225 contribute to the ATP site. His-448 is an L-aspartate binding site. Residue Glu-482 participates in ATP binding. Arg-489 is an L-aspartate binding site. 534–537 (GWDR) is a binding site for ATP. The segment at 558–598 (GGGVDPLTDAPAPITPQQRKESGIDAKPREDKPKEDAKSKA) is disordered. The span at 575–598 (QRKESGIDAKPREDKPKEDAKSKA) shows a compositional bias: basic and acidic residues.

It belongs to the class-II aminoacyl-tRNA synthetase family. Type 1 subfamily. As to quaternary structure, homodimer.

It is found in the cytoplasm. It carries out the reaction tRNA(Asx) + L-aspartate + ATP = L-aspartyl-tRNA(Asx) + AMP + diphosphate. Aspartyl-tRNA synthetase with relaxed tRNA specificity since it is able to aspartylate not only its cognate tRNA(Asp) but also tRNA(Asn). Reaction proceeds in two steps: L-aspartate is first activated by ATP to form Asp-AMP and then transferred to the acceptor end of tRNA(Asp/Asn). The chain is Aspartate--tRNA(Asp/Asn) ligase from Mycolicibacterium smegmatis (strain ATCC 700084 / mc(2)155) (Mycobacterium smegmatis).